We begin with the raw amino-acid sequence, 547 residues long: Sodium-coupled neutral amino acid transporter 4 (547 aa).

The tract at residues 1–34 (MDPMELNNVSIEPDGDSCSGDSIQDSYTGMENSD) is disordered. The Extracellular segment spans residues 1–104 (MDPMELNNVS…GLSYAMANTG (104 aa)). Positions 19–31 (SGDSIQDSYTGME) are enriched in polar residues. Position 49 is a phosphoserine (serine 49). A helical membrane pass occupies residues 105–125 (IILFIIMLLTVAILSLYSVHL). The Cytoplasmic portion of the chain corresponds to 126–151 (LLKTAKEGGSLIYEKLGEKAFGWPGK). The helical transmembrane segment at 152–172 (IGAFISITMQNIGAMSSYLFI) threads the bilayer. The Extracellular portion of the chain corresponds to 173–195 (IKYELPEVIRAFMGLEENTGEWY). The chain crosses the membrane as a helical span at residues 196–216 (LNGNYLVLFVSVGIILPLSLL). Residues 217 to 220 (KNLG) lie on the Cytoplasmic side of the membrane. The chain crosses the membrane as a helical span at residues 221–241 (YLGYTSGFSLSCMVFFVSVVI). Topologically, residues 242–332 (YKKFQIPCPL…PKYFVFNSRT (91 aa)) are extracellular. Residues cysteine 249 and cysteine 321 are joined by a disulfide bond. N-linked (GlcNAc...) asparagine glycosylation is found at asparagine 260, asparagine 264, and asparagine 276. The chain crosses the membrane as a helical span at residues 333 to 353 (AYAIPILAFAFVCHPEVLPIY). The Cytoplasmic portion of the chain corresponds to 354-369 (SELKDRSRRKMQTVSN). Residues 370–390 (ISISGMLVMYLLAALFGYLSF) form a helical membrane-spanning segment. The Extracellular segment spans residues 391 to 411 (YGDVEDELLHAYSKVYTFDTA). A helical transmembrane segment spans residues 412 to 432 (LLMVRLAVLVAVTLTVPIVLF). Topologically, residues 433-453 (PIRTSVITLLFPRKPFSWLKH) are cytoplasmic. A helical membrane pass occupies residues 454–474 (FGIAAIIIALNNILVILVPTI). Residues 475–476 (KY) are Extracellular-facing. Residues 477-497 (IFGFIGASSATMLIFILPAAF) form a helical membrane-spanning segment. Residues 498-514 (YLKLVKKEPLRSPQKIG) lie on the Cytoplasmic side of the membrane. A helical transmembrane segment spans residues 515–535 (ALVFLVTGIIFMMGSMALIIL). The Extracellular segment spans residues 536-547 (DWIYNPPNPNHH).

This sequence belongs to the amino acid/polyamine transporter 2 family. The disulfide bond plays an important role in substrate transport, but has no effect on trafficking to the cell surface. In terms of tissue distribution, detected in liver, in hepatocytes surrounding the central vein. Not detected in heart, kidney, brain, lung, small intestine, spleen and thymus. Highly expressed in placenta.

The protein localises to the cell membrane. Its subcellular location is the cell projection. The protein resides in the microvillus membrane. It carries out the reaction L-alanine(in) + Na(+)(in) = L-alanine(out) + Na(+)(out). The enzyme catalyses L-methionine(in) + Na(+)(in) = L-methionine(out) + Na(+)(out). The catalysed reaction is L-asparagine(in) + Na(+)(in) = L-asparagine(out) + Na(+)(out). It catalyses the reaction L-threonine(in) + Na(+)(in) = L-threonine(out) + Na(+)(out). It carries out the reaction L-serine(in) + Na(+)(in) = L-serine(out) + Na(+)(out). The enzyme catalyses glycine(in) + Na(+)(in) = glycine(out) + Na(+)(out). The catalysed reaction is L-glutamine(in) + Na(+)(in) = L-glutamine(out) + Na(+)(out). It catalyses the reaction L-histidine(in) + Na(+)(in) = L-histidine(out) + Na(+)(out). It carries out the reaction L-cysteine(in) + Na(+)(in) = L-cysteine(out) + Na(+)(out). The enzyme catalyses L-proline(in) + Na(+)(in) = L-proline(out) + Na(+)(out). Its function is as follows. Symporter that cotransports neutral amino acids and sodium ions from the extraccellular to the intracellular side of the cell membrane. The transport is electrogenic, pH dependent and partially tolerates substitution of Na(+) by Li(+). Preferentially transports smaller amino acids, such as glycine, L-alanine, L-serine, L-asparagine and L-threonine, followed by L-cysteine, L-histidine, L-proline and L-glutamine and L-methionine. In Mus musculus (Mouse), this protein is Sodium-coupled neutral amino acid transporter 4.